A 242-amino-acid polypeptide reads, in one-letter code: Small ribosomal subunit protein uS2 (242 aa).

This sequence belongs to the universal ribosomal protein uS2 family.

The protein is Small ribosomal subunit protein uS2 of Vibrio campbellii (strain ATCC BAA-1116).